Here is a 223-residue protein sequence, read N- to C-terminus: RNA pyrophosphohydrolase (223 aa).

The Nudix hydrolase domain occupies 6-149 (GFRPNVGIIL…KRGVYEMALT (144 aa)). Positions 38 to 59 (GGIDRGESPEQAMFRELHEEVG) match the Nudix box motif. The tract at residues 175–223 (ERHMPDGGAPAGLDLPPGGSFDPHPDITSASDDPSPPPHNKAPFLPSQR) is disordered. Low complexity predominate over residues 180 to 193 (DGGAPAGLDLPPGG).

Belongs to the Nudix hydrolase family. RppH subfamily. It depends on a divalent metal cation as a cofactor.

Its function is as follows. Accelerates the degradation of transcripts by removing pyrophosphate from the 5'-end of triphosphorylated RNA, leading to a more labile monophosphorylated state that can stimulate subsequent ribonuclease cleavage. The chain is RNA pyrophosphohydrolase from Variovorax paradoxus (strain S110).